The following is a 374-amino-acid chain: DNA integrity scanning protein DisA (374 aa).

The DAC domain maps to aspartate 20–serine 158. Residues glycine 87, leucine 105, and threonine 118–threonine 122 contribute to the ATP site.

Belongs to the DisA family. Homooctamer. It depends on Mg(2+) as a cofactor.

The catalysed reaction is 2 ATP = 3',3'-c-di-AMP + 2 diphosphate. Participates in a DNA-damage check-point that is active prior to asymmetric division when DNA is damaged. DisA forms globular foci that rapidly scan along the chromosomes during sporulation, searching for lesions. When a lesion is present, DisA pauses at the lesion site. This triggers a cellular response that culminates in a temporary block in sporulation initiation. Its function is as follows. Also has diadenylate cyclase activity, catalyzing the condensation of 2 ATP molecules into cyclic di-AMP (c-di-AMP). c-di-AMP acts as a signaling molecule that couples DNA integrity with progression of sporulation. The rise in c-di-AMP level generated by DisA while scanning the chromosome, operates as a positive signal that advances sporulation; upon encountering a lesion, the DisA focus arrests at the damaged site and halts c-di-AMP synthesis. This is DNA integrity scanning protein DisA from Streptomyces avermitilis (strain ATCC 31267 / DSM 46492 / JCM 5070 / NBRC 14893 / NCIMB 12804 / NRRL 8165 / MA-4680).